The following is a 465-amino-acid chain: ATP synthase subunit beta (465 aa).

Gly152–Thr159 provides a ligand contact to ATP.

This sequence belongs to the ATPase alpha/beta chains family. F-type ATPases have 2 components, CF(1) - the catalytic core - and CF(0) - the membrane proton channel. CF(1) has five subunits: alpha(3), beta(3), gamma(1), delta(1), epsilon(1). CF(0) has three main subunits: a(1), b(2) and c(9-12). The alpha and beta chains form an alternating ring which encloses part of the gamma chain. CF(1) is attached to CF(0) by a central stalk formed by the gamma and epsilon chains, while a peripheral stalk is formed by the delta and b chains.

Its subcellular location is the cell inner membrane. It catalyses the reaction ATP + H2O + 4 H(+)(in) = ADP + phosphate + 5 H(+)(out). In terms of biological role, produces ATP from ADP in the presence of a proton gradient across the membrane. The catalytic sites are hosted primarily by the beta subunits. The protein is ATP synthase subunit beta of Campylobacter fetus subsp. fetus (strain 82-40).